The primary structure comprises 434 residues: 4-hydroxy-3-methylbut-2-en-1-yl diphosphate synthase (flavodoxin) (434 aa).

The span at 1 to 15 (MQSEAQSPRSSQICS) shows a compositional bias: polar residues. The tract at residues 1-20 (MQSEAQSPRSSQICSTEPVF) is disordered. 4 residues coordinate [4Fe-4S] cluster: cysteine 322, cysteine 325, cysteine 368, and glutamate 375.

This sequence belongs to the IspG family. [4Fe-4S] cluster serves as cofactor.

The enzyme catalyses (2E)-4-hydroxy-3-methylbut-2-enyl diphosphate + oxidized [flavodoxin] + H2O + 2 H(+) = 2-C-methyl-D-erythritol 2,4-cyclic diphosphate + reduced [flavodoxin]. Its pathway is isoprenoid biosynthesis; isopentenyl diphosphate biosynthesis via DXP pathway; isopentenyl diphosphate from 1-deoxy-D-xylulose 5-phosphate: step 5/6. Its function is as follows. Converts 2C-methyl-D-erythritol 2,4-cyclodiphosphate (ME-2,4cPP) into 1-hydroxy-2-methyl-2-(E)-butenyl 4-diphosphate. This is 4-hydroxy-3-methylbut-2-en-1-yl diphosphate synthase (flavodoxin) from Burkholderia mallei (strain ATCC 23344).